The primary structure comprises 484 residues: Nuclear rim protein 1 (484 aa).

Position 3 is a phosphoserine (S3). A run of 2 helical transmembrane segments spans residues 145–165 and 252–272; these read FTIF…MFGY and TAIV…AIVF. Residues 416 to 457 are disordered; it reads SSNENLEKGGAYLPNQDQNRPSKSLSPLRKTPLSARQKRFEG. S417 carries the post-translational modification Phosphoserine. A compositionally biased stretch (polar residues) spans 430–440; that stretch reads NQDQNRPSKSL. S474 carries the phosphoserine modification.

It belongs to the NUR1 family. As to quaternary structure, interacts with CSM1.

It localises to the nucleus membrane. Its function is as follows. Member of a perinuclear network that controls recombination at multiple loci to maintain genome stability. Required for rDNA repeat stability. The polypeptide is Nuclear rim protein 1 (NUR1) (Saccharomyces cerevisiae (strain ATCC 204508 / S288c) (Baker's yeast)).